A 486-amino-acid chain; its full sequence is Serine/threonine-protein phosphatase 2A 56 kDa regulatory subunit alpha isoform (486 aa).

Serine 2 is subject to N-acetylserine. A disordered region spans residues 22-52 (DGFTRKSVRKAQRQKRSQGSSQFRSQGSQAE). Over residues 27 to 37 (KSVRKAQRQKR) the composition is skewed to basic residues. Positions 38–51 (SQGSSQFRSQGSQA) are enriched in low complexity. Serine 41, serine 42, and serine 49 each carry phosphoserine.

This sequence belongs to the phosphatase 2A regulatory subunit B56 family. In terms of assembly, PP2A consists of a common heterodimeric core enzyme, composed of a 36 kDa catalytic subunit (subunit C) and a 65 kDa constant regulatory subunit (PR65 or subunit A), that associates with a variety of regulatory subunits. Proteins that associate with the core dimer include three families of regulatory subunits B (the R2/B/PR55/B55, R3/B''/PR72/PR130/PR59 and R5/B'/B56 families), the 48 kDa variable regulatory subunit, viral proteins, and cell signaling molecules. Interacts with SGO1. In terms of tissue distribution, widely expressed with highest levels in thymus and ovary.

The protein resides in the cytoplasm. It is found in the nucleus. It localises to the chromosome. Its subcellular location is the centromere. The B regulatory subunit might modulate substrate selectivity and catalytic activity, and might also direct the localization of the catalytic enzyme to a particular subcellular compartment. This Mus musculus (Mouse) protein is Serine/threonine-protein phosphatase 2A 56 kDa regulatory subunit alpha isoform (Ppp2r5a).